A 118-amino-acid polypeptide reads, in one-letter code: Small ribosomal subunit protein uS13 (118 aa).

Residues 94–118 (SLPVRGQRTKTNARTRKGPRKPIKK) form a disordered region.

This sequence belongs to the universal ribosomal protein uS13 family. In terms of assembly, part of the 30S ribosomal subunit. Forms a loose heterodimer with protein S19. Forms two bridges to the 50S subunit in the 70S ribosome.

Located at the top of the head of the 30S subunit, it contacts several helices of the 16S rRNA. In the 70S ribosome it contacts the 23S rRNA (bridge B1a) and protein L5 of the 50S subunit (bridge B1b), connecting the 2 subunits; these bridges are implicated in subunit movement. Contacts the tRNAs in the A and P-sites. This is Small ribosomal subunit protein uS13 from Haemophilus influenzae (strain 86-028NP).